We begin with the raw amino-acid sequence, 390 residues long: Dual-specificity RNA methyltransferase RlmN (390 aa).

Glu-111 serves as the catalytic Proton acceptor. In terms of domain architecture, Radical SAM core spans 117-356; sequence EDDRATLCVS…VIVRKTRGDD (240 aa). Cys-124 and Cys-361 are joined by a disulfide. Residues Cys-131, Cys-135, and Cys-138 each coordinate [4Fe-4S] cluster. Residues 185–186, Ser-217, 239–241, and Asn-318 each bind S-adenosyl-L-methionine; these read GE and SLH. The active-site S-methylcysteine intermediate is the Cys-361.

It belongs to the radical SAM superfamily. RlmN family. It depends on [4Fe-4S] cluster as a cofactor.

The protein localises to the cytoplasm. It catalyses the reaction adenosine(2503) in 23S rRNA + 2 reduced [2Fe-2S]-[ferredoxin] + 2 S-adenosyl-L-methionine = 2-methyladenosine(2503) in 23S rRNA + 5'-deoxyadenosine + L-methionine + 2 oxidized [2Fe-2S]-[ferredoxin] + S-adenosyl-L-homocysteine. It carries out the reaction adenosine(37) in tRNA + 2 reduced [2Fe-2S]-[ferredoxin] + 2 S-adenosyl-L-methionine = 2-methyladenosine(37) in tRNA + 5'-deoxyadenosine + L-methionine + 2 oxidized [2Fe-2S]-[ferredoxin] + S-adenosyl-L-homocysteine. In terms of biological role, specifically methylates position 2 of adenine 2503 in 23S rRNA and position 2 of adenine 37 in tRNAs. m2A2503 modification seems to play a crucial role in the proofreading step occurring at the peptidyl transferase center and thus would serve to optimize ribosomal fidelity. This chain is Dual-specificity RNA methyltransferase RlmN, found in Edwardsiella ictaluri (strain 93-146).